A 433-amino-acid chain; its full sequence is 3-phosphoshikimate 1-carboxyvinyltransferase (433 aa).

3-phosphoshikimate-binding residues include K22, S23, and R27. K22 serves as a coordination point for phosphoenolpyruvate. G95 and R123 together coordinate phosphoenolpyruvate. Positions 167, 169, 315, and 342 each coordinate 3-phosphoshikimate. Q169 serves as a coordination point for phosphoenolpyruvate. The Proton acceptor role is filled by D315. 2 residues coordinate phosphoenolpyruvate: R346 and R387.

It belongs to the EPSP synthase family. Monomer.

The protein localises to the cytoplasm. It catalyses the reaction 3-phosphoshikimate + phosphoenolpyruvate = 5-O-(1-carboxyvinyl)-3-phosphoshikimate + phosphate. It functions in the pathway metabolic intermediate biosynthesis; chorismate biosynthesis; chorismate from D-erythrose 4-phosphate and phosphoenolpyruvate: step 6/7. Functionally, catalyzes the transfer of the enolpyruvyl moiety of phosphoenolpyruvate (PEP) to the 5-hydroxyl of shikimate-3-phosphate (S3P) to produce enolpyruvyl shikimate-3-phosphate and inorganic phosphate. The protein is 3-phosphoshikimate 1-carboxyvinyltransferase of Legionella pneumophila (strain Paris).